We begin with the raw amino-acid sequence, 348 residues long: Protein RecA (348 aa).

Residue 64 to 71 participates in ATP binding; the sequence is GPESSGKT. A disordered region spans residues 328-348; it reads DTGGAAPAQEDEAQAQEELEF. A compositionally biased stretch (acidic residues) spans 336–348; it reads QEDEAQAQEELEF.

It belongs to the RecA family.

Its subcellular location is the cytoplasm. Can catalyze the hydrolysis of ATP in the presence of single-stranded DNA, the ATP-dependent uptake of single-stranded DNA by duplex DNA, and the ATP-dependent hybridization of homologous single-stranded DNAs. It interacts with LexA causing its activation and leading to its autocatalytic cleavage. In Bacillus licheniformis (strain ATCC 14580 / DSM 13 / JCM 2505 / CCUG 7422 / NBRC 12200 / NCIMB 9375 / NCTC 10341 / NRRL NRS-1264 / Gibson 46), this protein is Protein RecA.